Here is a 114-residue protein sequence, read N- to C-terminus: U-myrmeciitoxin(01)-Mg8a (114 aa).

An N-terminal signal peptide occupies residues 1 to 20 (MKLSTLLVAFVLLVITVILS). A propeptide spanning residues 21–44 (TPSTNAKALAESNALAVAVSEAEP) is cleaved from the precursor.

The protein belongs to the formicidae venom precursor-01 superfamily. Expressed by the venom gland.

Its subcellular location is the secreted. May have antimicrobial properties, like most ant linear peptides. The sequence is that of U-myrmeciitoxin(01)-Mg8a from Myrmecia gulosa (Red bulldog ant).